The following is a 92-amino-acid chain: Putative defensin-like protein 251 (92 aa).

Residues 1–27 (MRCVTSFVVFCILMFFVLNIFTVEVKA) form the signal peptide. Disulfide bonds link Cys-34/Cys-90, Cys-45/Cys-69, Cys-53/Cys-82, and Cys-67/Cys-84.

This sequence belongs to the DEFL family.

The protein resides in the secreted. This chain is Putative defensin-like protein 251 (SCRL12), found in Arabidopsis thaliana (Mouse-ear cress).